Reading from the N-terminus, the 751-residue chain is Photosystem I P700 chlorophyll a apoprotein A1 (751 aa).

The next 8 membrane-spanning stretches (helical) occupy residues 73–96 (VFSAHFGQLGVIFIWLSGMYFHGA), 159–182 (LYSTAIGALICAGLMFFAGWWHYH), 198–222 (MNHHLAGLLGLGSLAWAGHQIHIAL), 294–312 (MAHHHLAIAVLFLVAGHQY), 349–372 (WHAQLAINLALMGSLSIIVSHHMY), 388–414 (LSLFTHHMWIGGFCICGAAAHAAIFMV), 436–458 (AIISHLNWVCIFLGFHSFGLYIH), and 533–551 (FMVHHIHAFTIHVTVLILL). Residues Cys575 and Cys584 each contribute to the [4Fe-4S] cluster site. The next 2 helical transmembrane spans lie at 591 to 612 (HVFLGLFWMYNSISIVIFHFSW) and 665 to 687 (LSAYGLIFLGAHFIWAFSLMFLF). A chlorophyll a'-binding site is contributed by His676. The chlorophyll a site is built by Met684 and Tyr692. Trp693 lines the phylloquinone pocket. A helical membrane pass occupies residues 725–745 (AVGVAHYLLGGIATTWSFFLA).

The protein belongs to the PsaA/PsaB family. As to quaternary structure, the PsaA/B heterodimer binds the P700 chlorophyll special pair and subsequent electron acceptors. PSI consists of a core antenna complex that captures photons, and an electron transfer chain that converts photonic excitation into a charge separation. The eukaryotic PSI reaction center is composed of at least 11 subunits. P700 is a chlorophyll a/chlorophyll a' dimer, A0 is one or more chlorophyll a, A1 is one or both phylloquinones and FX is a shared 4Fe-4S iron-sulfur center. is required as a cofactor.

It is found in the plastid. The protein localises to the chloroplast thylakoid membrane. The catalysed reaction is reduced [plastocyanin] + hnu + oxidized [2Fe-2S]-[ferredoxin] = oxidized [plastocyanin] + reduced [2Fe-2S]-[ferredoxin]. Its function is as follows. PsaA and PsaB bind P700, the primary electron donor of photosystem I (PSI), as well as the electron acceptors A0, A1 and FX. PSI is a plastocyanin/cytochrome c6-ferredoxin oxidoreductase, converting photonic excitation into a charge separation, which transfers an electron from the donor P700 chlorophyll pair to the spectroscopically characterized acceptors A0, A1, FX, FA and FB in turn. Oxidized P700 is reduced on the lumenal side of the thylakoid membrane by plastocyanin or cytochrome c6. The polypeptide is Photosystem I P700 chlorophyll a apoprotein A1 (Ostreococcus tauri).